The chain runs to 196 residues: Nodulation protein A (196 aa).

Belongs to the NodA family.

The protein localises to the cytoplasm. Functionally, N-acyltransferase required for nodulation. Acts in the production of a small, heat-stable compound (Nod) that stimulates mitosis in various plant protoplasts. This chain is Nodulation protein A, found in Sinorhizobium terangae.